The following is a 706-amino-acid chain: SPX domain-containing membrane protein OsI_32082 (706 aa).

Positions 2–145 constitute an SPX domain; that stretch reads VNFSNKLTKD…GYKFTDYYVR (144 aa). Transmembrane regions (helical) follow at residues 251-271, 281-301, 318-338, 340-359, 378-398, and 414-434; these read MSLV…YIVV, LGAA…AQVF, LLFS…AFDL, SLTI…ARAV, AAFV…AGLL, and LPGW…WISF. The interval 475-498 is disordered; that stretch reads SEQDEEDDNGDEEHNETLSSSTTT. Acidic residues predominate over residues 476–488; the sequence is EQDEEDDNGDEEH. A run of 5 helical transmembrane segments spans residues 520 to 540, 554 to 574, 583 to 603, 611 to 631, and 678 to 698; these read LLIY…SSVV, VFLA…GTYI, ILVA…KLTV, VCSA…NLSL, and LLNA…AATL.

The protein belongs to the major facilitator superfamily.

It is found in the membrane. In Oryza sativa subsp. indica (Rice), this protein is SPX domain-containing membrane protein OsI_32082.